An 85-amino-acid polypeptide reads, in one-letter code: Small ribosomal subunit protein uS17 (85 aa).

This sequence belongs to the universal ribosomal protein uS17 family. As to quaternary structure, part of the 30S ribosomal subunit.

Its function is as follows. One of the primary rRNA binding proteins, it binds specifically to the 5'-end of 16S ribosomal RNA. This Lachnoclostridium phytofermentans (strain ATCC 700394 / DSM 18823 / ISDg) (Clostridium phytofermentans) protein is Small ribosomal subunit protein uS17.